Consider the following 126-residue polypeptide: Large ribosomal subunit protein uL22c (126 aa).

This sequence belongs to the universal ribosomal protein uL22 family. In terms of assembly, part of the 50S ribosomal subunit.

Its subcellular location is the plastid. It is found in the chloroplast. Functionally, this protein binds specifically to 23S rRNA. The globular domain of the protein is located near the polypeptide exit tunnel on the outside of the subunit, while an extended beta-hairpin is found that lines the wall of the exit tunnel in the center of the 70S ribosome. The polypeptide is Large ribosomal subunit protein uL22c (rpl22) (Cryptomeria japonica (Japanese cedar)).